A 67-amino-acid chain; its full sequence is Protein DsrB (67 aa).

Belongs to the DsrB family.

This Pectobacterium carotovorum subsp. carotovorum (strain PC1) protein is Protein DsrB.